We begin with the raw amino-acid sequence, 127 residues long: Fluoride-specific ion channel FluC (127 aa).

4 helical membrane-spanning segments follow: residues 4–24 (FSIL…RYLV), 38–58 (YGTL…IAAF), 71–91 (VIGL…MDNV), and 104–124 (LNIL…FQLL). Positions 78 and 81 each coordinate Na(+).

This sequence belongs to the fluoride channel Fluc/FEX (TC 1.A.43) family.

It is found in the cell inner membrane. It catalyses the reaction fluoride(in) = fluoride(out). With respect to regulation, na(+) is not transported, but it plays an essential structural role and its presence is essential for fluoride channel function. Fluoride-specific ion channel. Important for reducing fluoride concentration in the cell, thus reducing its toxicity. In Vibrio parahaemolyticus serotype O3:K6 (strain RIMD 2210633), this protein is Fluoride-specific ion channel FluC.